The sequence spans 465 residues: E3 ubiquitin-protein ligase ORTHRUS-LIKE 1 (465 aa).

A disordered region spans residues 31-69; it reads TSLSSPLDRSGDVDPLPVSDESGGSKADESMTDADETKK. An RING-type zinc finger spans residues 109–148; the sequence is CSLCNQLPDRPVTILCGHNFCLKCFDKWIDQGNQICATCR. A YDG domain is found at 233-374; sequence VRNQGVLVGE…FKVCRYLFVR (142 aa). A helical transmembrane segment spans residues 442–462; that stretch reads MAMTCLLLFVLIILVGSSSIL.

Its subcellular location is the nucleus. It is found in the membrane. It carries out the reaction S-ubiquitinyl-[E2 ubiquitin-conjugating enzyme]-L-cysteine + [acceptor protein]-L-lysine = [E2 ubiquitin-conjugating enzyme]-L-cysteine + N(6)-ubiquitinyl-[acceptor protein]-L-lysine.. Its pathway is protein modification; protein ubiquitination. Its function is as follows. E3 ubiquitin-protein ligase. May participate in methylation-dependent transcriptional regulation. Mediates ubiquitination with the E2 ubiquitin-conjugating enzyme UBC11. This Arabidopsis thaliana (Mouse-ear cress) protein is E3 ubiquitin-protein ligase ORTHRUS-LIKE 1 (ORTHL).